A 472-amino-acid chain; its full sequence is Protein c-ets-2-A (472 aa).

One can recognise a PNT domain in the interval 85–170 (NTFNGFAKKR…EHLEEMMKEH (86 aa)). Residues 366–446 (IQLWQFLLEL…SGKRYVYRFV (81 aa)) constitute a DNA-binding region (ETS).

It belongs to the ETS family.

It localises to the nucleus. Its function is as follows. Probable transcription factor. The polypeptide is Protein c-ets-2-A (ets2-a) (Xenopus laevis (African clawed frog)).